The following is a 217-amino-acid chain: Pyrophosphatase PpaX (217 aa).

Residue aspartate 11 is the Nucleophile of the active site.

This sequence belongs to the HAD-like hydrolase superfamily. PpaX family. Mg(2+) serves as cofactor.

The catalysed reaction is diphosphate + H2O = 2 phosphate + H(+). Functionally, hydrolyzes pyrophosphate formed during P-Ser-HPr dephosphorylation by HPrK/P. Might play a role in controlling the intracellular pyrophosphate pool. This Listeria monocytogenes serotype 4b (strain CLIP80459) protein is Pyrophosphatase PpaX.